Here is an 87-residue protein sequence, read N- to C-terminus: Large ribosomal subunit protein bL27 (87 aa).

Residues methionine 1–leucine 21 are disordered.

This sequence belongs to the bacterial ribosomal protein bL27 family.

This Paraburkholderia xenovorans (strain LB400) protein is Large ribosomal subunit protein bL27.